The primary structure comprises 842 residues: Elongation factor 2 (842 aa).

One can recognise a tr-type G domain in the interval 17–253 (TNVRNMSVIA…LWGDSYFNPK (237 aa)). GTP contacts are provided by residues 26–33 (AHVDHGKS), 158–161 (NKVD), and 213–215 (SGL). Diphthamide is present on histidine 699.

The protein belongs to the TRAFAC class translation factor GTPase superfamily. Classic translation factor GTPase family. EF-G/EF-2 subfamily.

Its subcellular location is the cytoplasm. The enzyme catalyses GTP + H2O = GDP + phosphate + H(+). Its function is as follows. Catalyzes the GTP-dependent ribosomal translocation step during translation elongation. During this step, the ribosome changes from the pre-translocational (PRE) to the post-translocational (POST) state as the newly formed A-site-bound peptidyl-tRNA and P-site-bound deacylated tRNA move to the P and E sites, respectively. Catalyzes the coordinated movement of the two tRNA molecules, the mRNA and conformational changes in the ribosome. The polypeptide is Elongation factor 2 (EFT1) (Eremothecium gossypii (strain ATCC 10895 / CBS 109.51 / FGSC 9923 / NRRL Y-1056) (Yeast)).